Consider the following 201-residue polypeptide: Probable nicotinate-nucleotide adenylyltransferase (201 aa).

The protein belongs to the NadD family.

It carries out the reaction nicotinate beta-D-ribonucleotide + ATP + H(+) = deamido-NAD(+) + diphosphate. The protein operates within cofactor biosynthesis; NAD(+) biosynthesis; deamido-NAD(+) from nicotinate D-ribonucleotide: step 1/1. In terms of biological role, catalyzes the reversible adenylation of nicotinate mononucleotide (NaMN) to nicotinic acid adenine dinucleotide (NaAD). The chain is Probable nicotinate-nucleotide adenylyltransferase from Bacteroides fragilis (strain YCH46).